A 263-amino-acid polypeptide reads, in one-letter code: 4-hydroxy-tetrahydrodipicolinate reductase (263 aa).

NAD(+)-binding positions include 7-12 (GASGRM) and D33. R34 is a binding site for NADP(+). NAD(+)-binding positions include 96 to 98 (GTT) and 120 to 123 (APNM). Catalysis depends on H153, which acts as the Proton donor/acceptor. H154 is a binding site for (S)-2,3,4,5-tetrahydrodipicolinate. K157 functions as the Proton donor in the catalytic mechanism. 163 to 164 (GT) contributes to the (S)-2,3,4,5-tetrahydrodipicolinate binding site.

Belongs to the DapB family.

It is found in the cytoplasm. The catalysed reaction is (S)-2,3,4,5-tetrahydrodipicolinate + NAD(+) + H2O = (2S,4S)-4-hydroxy-2,3,4,5-tetrahydrodipicolinate + NADH + H(+). The enzyme catalyses (S)-2,3,4,5-tetrahydrodipicolinate + NADP(+) + H2O = (2S,4S)-4-hydroxy-2,3,4,5-tetrahydrodipicolinate + NADPH + H(+). It functions in the pathway amino-acid biosynthesis; L-lysine biosynthesis via DAP pathway; (S)-tetrahydrodipicolinate from L-aspartate: step 4/4. Functionally, catalyzes the conversion of 4-hydroxy-tetrahydrodipicolinate (HTPA) to tetrahydrodipicolinate. The chain is 4-hydroxy-tetrahydrodipicolinate reductase from Ralstonia nicotianae (strain ATCC BAA-1114 / GMI1000) (Ralstonia solanacearum).